Reading from the N-terminus, the 463-residue chain is HEPACAM family member 2 (463 aa).

The first 32 residues, 1 to 32 (MGQDAFMELLRSMVGLSLCKIHLLLIAGSCLG), serve as a signal peptide directing secretion. Residues asparagine 86, asparagine 130, and asparagine 166 are each glycosylated (N-linked (GlcNAc...) asparagine). 2 consecutive Ig-like C2-type domains span residues 150–234 (PMVQ…SDII) and 236–332 (PTIY…TRFT). 2 disulfides stabilise this stretch: cysteine 171–cysteine 220 and cysteine 271–cysteine 316. N-linked (GlcNAc...) asparagine glycosylation is present at asparagine 321. The helical transmembrane segment at 353–373 (LASITGISLFLIISMCLLFLW) threads the bilayer. Residues 374-463 (KKYQPYKAIR…IPEQQQENTE (90 aa)) lie on the Cytoplasmic side of the membrane.

Post-translationally, poly-ADP-ribosylated (PARsylated) by tankyrase TNKS during late G2 and prophase, leading to translocation to mitotic centrosomes. In terms of processing, N-glycosylated.

The protein resides in the golgi apparatus membrane. Its subcellular location is the cytoplasm. It is found in the cytoskeleton. The protein localises to the spindle. It localises to the microtubule organizing center. The protein resides in the centrosome. Its subcellular location is the midbody. Its function is as follows. Required during prometaphase for centrosome maturation. Following poly-ADP-ribosylation (PARsylation) by TNKS, translocates from the Golgi apparatus to mitotic centrosomes and plays a key role in the formation of robust microtubules for prompt movement of chromosomes: anchors AKAP9/CG-NAP, a scaffold protein of the gamma-tubulin ring complex and promotes centrosome maturation. This is HEPACAM family member 2 (Hepacam2) from Mus musculus (Mouse).